The following is a 118-amino-acid chain: Large ribosomal subunit protein bL19 (118 aa).

It belongs to the bacterial ribosomal protein bL19 family.

Functionally, this protein is located at the 30S-50S ribosomal subunit interface and may play a role in the structure and function of the aminoacyl-tRNA binding site. The polypeptide is Large ribosomal subunit protein bL19 (Nautilia profundicola (strain ATCC BAA-1463 / DSM 18972 / AmH)).